Here is a 191-residue protein sequence, read N- to C-terminus: Nucleoside triphosphate pyrophosphatase (191 aa).

The Proton acceptor role is filled by Asp70.

This sequence belongs to the Maf family. It depends on a divalent metal cation as a cofactor.

The protein resides in the cytoplasm. The catalysed reaction is a ribonucleoside 5'-triphosphate + H2O = a ribonucleoside 5'-phosphate + diphosphate + H(+). It catalyses the reaction a 2'-deoxyribonucleoside 5'-triphosphate + H2O = a 2'-deoxyribonucleoside 5'-phosphate + diphosphate + H(+). In terms of biological role, nucleoside triphosphate pyrophosphatase. May have a dual role in cell division arrest and in preventing the incorporation of modified nucleotides into cellular nucleic acids. The protein is Nucleoside triphosphate pyrophosphatase of Synechococcus sp. (strain WH7803).